A 116-amino-acid chain; its full sequence is Ribosome-binding factor A (116 aa).

Belongs to the RbfA family. Monomer. Binds 30S ribosomal subunits, but not 50S ribosomal subunits or 70S ribosomes.

It localises to the cytoplasm. Functionally, one of several proteins that assist in the late maturation steps of the functional core of the 30S ribosomal subunit. Associates with free 30S ribosomal subunits (but not with 30S subunits that are part of 70S ribosomes or polysomes). Required for efficient processing of 16S rRNA. May interact with the 5'-terminal helix region of 16S rRNA. This Levilactobacillus brevis (strain ATCC 367 / BCRC 12310 / CIP 105137 / JCM 1170 / LMG 11437 / NCIMB 947 / NCTC 947) (Lactobacillus brevis) protein is Ribosome-binding factor A.